Consider the following 244-residue polypeptide: 5-oxoprolinase subunit A (244 aa).

This sequence belongs to the LamB/PxpA family. In terms of assembly, forms a complex composed of PxpA, PxpB and PxpC.

It carries out the reaction 5-oxo-L-proline + ATP + 2 H2O = L-glutamate + ADP + phosphate + H(+). Catalyzes the cleavage of 5-oxoproline to form L-glutamate coupled to the hydrolysis of ATP to ADP and inorganic phosphate. The chain is 5-oxoprolinase subunit A from Shigella sonnei (strain Ss046).